The sequence spans 451 residues: tRNA-2-methylthio-N(6)-dimethylallyladenosine synthase (451 aa).

Residues 6 to 122 (RRYHIITFGC…LDQLLEQVWA (117 aa)) enclose the MTTase N-terminal domain. [4Fe-4S] cluster-binding residues include Cys15, Cys51, Cys85, Cys157, Cys161, and Cys164. One can recognise a Radical SAM core domain in the interval 143–384 (RESTVSAWVN…STQAMERSQR (242 aa)). One can recognise a TRAM domain in the interval 383–447 (QRYLGRVEEV…AFSLTGEALS (65 aa)).

It belongs to the methylthiotransferase family. MiaB subfamily. Monomer. [4Fe-4S] cluster serves as cofactor.

It is found in the cytoplasm. It catalyses the reaction N(6)-dimethylallyladenosine(37) in tRNA + (sulfur carrier)-SH + AH2 + 2 S-adenosyl-L-methionine = 2-methylsulfanyl-N(6)-dimethylallyladenosine(37) in tRNA + (sulfur carrier)-H + 5'-deoxyadenosine + L-methionine + A + S-adenosyl-L-homocysteine + 2 H(+). In terms of biological role, catalyzes the methylthiolation of N6-(dimethylallyl)adenosine (i(6)A), leading to the formation of 2-methylthio-N6-(dimethylallyl)adenosine (ms(2)i(6)A) at position 37 in tRNAs that read codons beginning with uridine. The chain is tRNA-2-methylthio-N(6)-dimethylallyladenosine synthase from Synechocystis sp. (strain ATCC 27184 / PCC 6803 / Kazusa).